The chain runs to 315 residues: Trimethylguanosine synthase (315 aa).

Residues 1–58 (MGRTFIHASKIKHAARKRKHHSNFRTLIKLLNNDAYKIESSKPLKNGKLFKYWKNRRR) form a required for correct nucleolar localization region. Asp126 is a binding site for S-adenosyl-L-methionine. Residues 271 to 315 (TENSRRESSEKEELSSENEELSKRKKHESTTTTKDNTVDIYDVNG) form a disordered region. Residues 273-284 (NSRRESSEKEEL) show a composition bias toward basic and acidic residues.

The protein belongs to the methyltransferase superfamily. Trimethylguanosine synthase family. Monomer. Interacts with the spliceosomal snRNP core component SMB1 and the snoRNP components CBF5 and NOP58.

The protein localises to the nucleus. It localises to the nucleolus. The enzyme catalyses a 5'-end (N(7)-methyl 5'-triphosphoguanosine)-ribonucleoside in snRNA + S-adenosyl-L-methionine = a 5'-end (N(2),N(7)-dimethyl 5'-triphosphoguanosine)-ribonucleoside in snRNA + S-adenosyl-L-homocysteine + H(+). It catalyses the reaction a 5'-end (N(7)-methyl 5'-triphosphoguanosine)-ribonucleoside in snoRNA + S-adenosyl-L-methionine = a 5'-end (N(2),N(7)-dimethyl 5'-triphosphoguanosine)-ribonucleoside in snoRNA + S-adenosyl-L-homocysteine + H(+). It carries out the reaction a 5'-end (N(2),N(7)-dimethyl 5'-triphosphoguanosine)-ribonucleoside in snRNA + S-adenosyl-L-methionine = a 5'-end (N(2),N(2),N(7)-trimethyl 5'-triphosphoguanosine)-ribonucleoside in snRNA + S-adenosyl-L-homocysteine + H(+). The catalysed reaction is a 5'-end (N(2),N(7)-dimethyl 5'-triphosphoguanosine)-ribonucleoside in snoRNA + S-adenosyl-L-methionine = a 5'-end (N(2),N(2),N(7)-trimethyl 5'-triphosphoguanosine)-ribonucleoside in snoRNA + S-adenosyl-L-homocysteine + H(+). With respect to regulation, substrate inhibited by S-adenosyl-L-homocysteine. Functionally, catalyzes the two serial methylation steps for the conversion of the 7-monomethylguanosine (m(7)G) caps of snRNAs and snoRNAs to a 2,2,7-trimethylguanosine (m(2,2,7)G) cap structure. The enzyme is specific for guanine, and N7 methylation must precede N2 methylation. Hypermethylates the m3G cap on TLC1 telomerase which affects telomere silencing and telomere length regulation. Required for pre-mRNA splicing, pre-rRNA processing and small ribosomal subunit synthesis. Involved in nucleolar structural organization. The sequence is that of Trimethylguanosine synthase (TGS1) from Saccharomyces cerevisiae (strain ATCC 204508 / S288c) (Baker's yeast).